An 88-amino-acid chain; its full sequence is FXYD domain-containing ion transport regulator 3 (88 aa).

An N-terminal signal peptide occupies residues 1–20 (MQEFALSLLVLLAGLPTLDA). Residues 21–38 (NDPEDKDSPFYYDWHSLR) are Extracellular-facing. A helical transmembrane segment spans residues 39-59 (VGGLICAGILCALGIIVLMSG). Residues 60 to 88 (KCKCKFSQKPSHRPGDGPPLITPGSAHNC) lie on the Cytoplasmic side of the membrane. Positions 66 to 88 (SQKPSHRPGDGPPLITPGSAHNC) are disordered.

It belongs to the FXYD family. As to quaternary structure, regulatory subunit of the sodium/potassium-transporting ATPase which is composed of a catalytic alpha subunit, a non-catalytic beta subunit and an additional regulatory subunit. Interacts with catalytic alpha subunit ATP1A1. Also interacts with non-catalytic beta subunit ATP1B1. Interacts with the alpha1-beta1, alpha2-beta1 and alpha3-beta1 NKA isozymes. Glutathionylated.

The protein resides in the cell membrane. Associates with and regulates the activity of the sodium/potassium-transporting ATPase (NKA) which transports Na(+) out of the cell and K(+) into the cell. Reduces glutathionylation of the NKA beta-1 subunit ATP1B1, thus reversing glutathionylation-mediated inhibition of ATP1B1. Induces a hyperpolarization-activated chloride current when expressed in Xenopus oocytes. This Rattus norvegicus (Rat) protein is FXYD domain-containing ion transport regulator 3 (Fxyd3).